We begin with the raw amino-acid sequence, 69 residues long: Putative membrane protein insertion efficiency factor (69 aa).

Belongs to the UPF0161 family.

It is found in the cell inner membrane. Its function is as follows. Could be involved in insertion of integral membrane proteins into the membrane. The chain is Putative membrane protein insertion efficiency factor from Geobacter sulfurreducens (strain ATCC 51573 / DSM 12127 / PCA).